Consider the following 329-residue polypeptide: Red chlorophyll catabolite reductase 1, chloroplastic (329 aa).

Positions 1–11 (MLQLRSPPPAT) are enriched in pro residues. Residues 1–50 (MLQLRSPPPATSSPSSAVSFPTLAPRLLPLRRRRRGAGSQLGGKTSSAVR) constitute a chloroplast transit peptide. Positions 1 to 61 (MLQLRSPPPA…SSAAAPGATE (61 aa)) are disordered. 2 stretches are compositionally biased toward low complexity: residues 12-28 (SSPS…PRLL) and 46-59 (SSAV…APGA). Red chlorophyll catabolite contacts are provided by residues Glu163, 216 to 218 (YRS), and Asp299.

In terms of tissue distribution, expressed in leaves. Expressed at low levels in roots, stems, panicles and seeds.

It localises to the plastid. The protein localises to the chloroplast. It carries out the reaction primary fluorescent chlorophyll catabolite + 2 oxidized [2Fe-2S]-[ferredoxin] = red chlorophyll catabolite + 2 reduced [2Fe-2S]-[ferredoxin] + 3 H(+). Its pathway is porphyrin-containing compound metabolism; chlorophyll degradation. Functionally, catalyzes the key reaction of chlorophyll catabolism, porphyrin macrocycle cleavage of pheophorbide a (pheide a) to a primary fluorescent catabolite (pFCC). Works in a two-step reaction with pheophorbide a oxygenase (PaO) by reducing the C20/C1 double bond of the intermediate, RCC. Belongs to the chlorophyll catabolic enzymes (CCEs). May play a role in senescence and response to wounding. The sequence is that of Red chlorophyll catabolite reductase 1, chloroplastic from Oryza sativa subsp. japonica (Rice).